Reading from the N-terminus, the 494-residue chain is Prenylcysteine oxidase 1-like (494 aa).

The N-terminal stretch at 1–22 (MARAAPLLAALTALLAAAAAGG) is a signal peptide. N342 carries N-linked (GlcNAc...) asparagine glycosylation.

Belongs to the prenylcysteine oxidase family. The cofactor is FAD.

The protein resides in the secreted. Its function is as follows. Likely to have oxidoreductase activity. Required in the mevalonate pathway to regulate prenylation and enhances the bactericidal activity of neutrophils. This chain is Prenylcysteine oxidase 1-like (PCYOX1L), found in Homo sapiens (Human).